Consider the following 495-residue polypeptide: Probable cytosol aminopeptidase (495 aa).

Lysine 267 and aspartate 272 together coordinate Mn(2+). Lysine 279 is an active-site residue. Mn(2+) contacts are provided by aspartate 290, aspartate 349, and glutamate 351. Residue arginine 353 is part of the active site.

It belongs to the peptidase M17 family. It depends on Mn(2+) as a cofactor.

Its subcellular location is the cytoplasm. It catalyses the reaction Release of an N-terminal amino acid, Xaa-|-Yaa-, in which Xaa is preferably Leu, but may be other amino acids including Pro although not Arg or Lys, and Yaa may be Pro. Amino acid amides and methyl esters are also readily hydrolyzed, but rates on arylamides are exceedingly low.. The catalysed reaction is Release of an N-terminal amino acid, preferentially leucine, but not glutamic or aspartic acids.. Functionally, presumably involved in the processing and regular turnover of intracellular proteins. Catalyzes the removal of unsubstituted N-terminal amino acids from various peptides. The sequence is that of Probable cytosol aminopeptidase from Histophilus somni (strain 2336) (Haemophilus somnus).